The chain runs to 451 residues: UPF0210 protein lin0538 (451 aa).

This sequence belongs to the UPF0210 family. In terms of assembly, homodimer.

The protein is UPF0210 protein lin0538 of Listeria innocua serovar 6a (strain ATCC BAA-680 / CLIP 11262).